Here is a 98-residue protein sequence, read N- to C-terminus: NADH-ubiquinone oxidoreductase chain 4L (98 aa).

3 helical membrane-spanning segments follow: residues 1 to 21, 29 to 49, and 61 to 81; these read MSLV…GLLM, SLLC…LTIL, and IILL…LVMV.

It belongs to the complex I subunit 4L family. Core subunit of respiratory chain NADH dehydrogenase (Complex I) which is composed of 45 different subunits.

It localises to the mitochondrion inner membrane. It carries out the reaction a ubiquinone + NADH + 5 H(+)(in) = a ubiquinol + NAD(+) + 4 H(+)(out). Core subunit of the mitochondrial membrane respiratory chain NADH dehydrogenase (Complex I) which catalyzes electron transfer from NADH through the respiratory chain, using ubiquinone as an electron acceptor. Part of the enzyme membrane arm which is embedded in the lipid bilayer and involved in proton translocation. This Rangifer tarandus (Reindeer) protein is NADH-ubiquinone oxidoreductase chain 4L (MT-ND4L).